Here is a 764-residue protein sequence, read N- to C-terminus: Ergosteryl-beta-glucosidase (764 aa).

The active-site Nucleophile is Glu515. A disordered region spans residues 588–629 (HDTRAKTPTPEPSPASTVASVSTSTSKSGSSQPPSFIKPDNH). Thr594 carries the phosphothreonine modification. The span at 601–622 (PASTVASVSTSTSKSGSSQPPS) shows a compositional bias: low complexity.

This sequence belongs to the glycosyl hydrolase 5 (cellulase A) family.

The protein resides in the cytoplasm. Its subcellular location is the cytosol. It is found in the vacuole membrane. It carries out the reaction ergosteryl 3-beta-D-glucoside + H2O = ergosterol + D-glucose. In terms of biological role, ergosteryl beta-glucosidase involved in the ergosteryl beta-glucoside (EG) catabolic pathway and vacuole formation via hydrolysis of EG to generate glucose. Is also able to hydrolyze cholesteryl beta-glucoside and sitosteryl beta-glucoside to generate glucose; and C6-7-nitro-2,1,3-benzoxadiazole (NBD)-GlcCer to generate C6-NBD-ceramide (Cer). The protein is Ergosteryl-beta-glucosidase of Saccharomyces cerevisiae (strain ATCC 204508 / S288c) (Baker's yeast).